A 570-amino-acid polypeptide reads, in one-letter code: Phosphoenolpyruvate-protein phosphotransferase (570 aa).

Histidine 189 functions as the Tele-phosphohistidine intermediate in the catalytic mechanism. Phosphoenolpyruvate contacts are provided by arginine 296 and arginine 332. Residues glutamate 431 and aspartate 455 each contribute to the Mg(2+) site. Phosphoenolpyruvate contacts are provided by residues 454 to 455 (ND) and arginine 465. The Proton donor role is filled by cysteine 502.

Belongs to the PEP-utilizing enzyme family. As to quaternary structure, homodimer. The cofactor is Mg(2+).

The protein resides in the cytoplasm. The enzyme catalyses L-histidyl-[protein] + phosphoenolpyruvate = N(pros)-phospho-L-histidyl-[protein] + pyruvate. In terms of biological role, general (non sugar-specific) component of the phosphoenolpyruvate-dependent sugar phosphotransferase system (sugar PTS). This major carbohydrate active-transport system catalyzes the phosphorylation of incoming sugar substrates concomitantly with their translocation across the cell membrane. Enzyme I transfers the phosphoryl group from phosphoenolpyruvate (PEP) to the phosphoryl carrier protein (HPr). The sequence is that of Phosphoenolpyruvate-protein phosphotransferase (ptsI) from Buchnera aphidicola subsp. Schizaphis graminum (strain Sg).